The chain runs to 321 residues: Ribose-phosphate pyrophosphokinase 2 (321 aa).

3 residues coordinate Mg(2+): D130, H132, and D145. S172 carries the phosphoserine modification.

This sequence belongs to the ribose-phosphate pyrophosphokinase family.

The protein localises to the cytoplasm. It carries out the reaction D-ribose 5-phosphate + ATP = 5-phospho-alpha-D-ribose 1-diphosphate + AMP + H(+). It participates in metabolic intermediate biosynthesis; 5-phospho-alpha-D-ribose 1-diphosphate biosynthesis; 5-phospho-alpha-D-ribose 1-diphosphate from D-ribose 5-phosphate (route I): step 1/1. 5-phosphoribose 1-diphosphate synthase involved in nucleotide, histidine, and tryptophan biosynthesis. Active in heteromultimeric complexes with other 5-phosphoribose 1-diphosphate synthases. The polypeptide is Ribose-phosphate pyrophosphokinase 2 (Schizosaccharomyces pombe (strain 972 / ATCC 24843) (Fission yeast)).